The following is a 168-amino-acid chain: Photosystem I assembly protein Ycf3 (168 aa).

3 TPR repeats span residues A35–P68, S72–L105, and G120–N153.

Belongs to the Ycf3 family.

It is found in the plastid membrane. In terms of biological role, essential for the assembly of the photosystem I (PSI) complex. May act as a chaperone-like factor to guide the assembly of the PSI subunits. The polypeptide is Photosystem I assembly protein Ycf3 (Cuscuta reflexa (Southern Asian dodder)).